The sequence spans 454 residues: G-protein coupled receptor 39 (454 aa).

At Met-1 to Ile-34 the chain is on the extracellular side. Disulfide bonds link Cys-11–Cys-191 and Cys-108–Cys-210. Residues His-17 and His-19 each coordinate Zn(2+). A helical membrane pass occupies residues Leu-35–Thr-55. Over Gln-56–Thr-69 the chain is Cytoplasmic. The helical transmembrane segment at Asp-70–Met-89 threads the bilayer. At Glu-90 to Lys-109 the chain is on the extracellular side. Residues Val-110–Phe-131 traverse the membrane as a helical segment. The Cytoplasmic segment spans residues Glu-132–Gln-151. The chain crosses the membrane as a helical span at residues Val-152 to Phe-172. Residues Ala-173 to Trp-217 are Extracellular-facing. Residues Asn-192, Asn-206, and Asn-212 are each glycosylated (N-linked (GlcNAc...) asparagine). A helical membrane pass occupies residues Thr-218–Cys-242. Residues Trp-243 to Ile-283 lie on the Cytoplasmic side of the membrane. The chain crosses the membrane as a helical span at residues Phe-284–Met-305. Topologically, residues Ala-306–Met-323 are extracellular. A helical membrane pass occupies residues Ile-324–Tyr-344. Residues Asn-345 to Val-454 lie on the Cytoplasmic side of the membrane. Ser-397 carries the phosphoserine modification. Residues His-415 to Val-454 are disordered.

The protein belongs to the G-protein coupled receptor 1 family. As to quaternary structure, interacts with HTR1A. Interacts with GALR1. Detected in liver, kidney, abomasum, uterus, small intestine and colon.

The protein resides in the cell membrane. Functionally, zinc-sensing receptor that can sense changes in extracellular Zn(2+), mediate Zn(2+) signal transmission, and participates in the regulation of numerous physiological processes including glucose homeostasis regulation, gastrointestinal mobility, hormone secretion and cell death. Activation by Zn(2+) in keratinocytes increases the intracellular concentration of Ca(2+) and activates the ERK/MAPK and PI3K/AKT signaling pathways leading to epithelial repair. Plays an essential role in normal wound healing by inducing the production of cytokines including the major inflammatory cytokine IL6 via the PKC/MAPK/CEBPB pathway. Regulates adipose tissue metabolism, especially lipolysis, and regulates the function of lipases, such as hormone-sensitive lipase and adipose triglyceride lipase. Plays a role in the inhibition of cell death and protects against oxidative, endoplasmic reticulum and mitochondrial stress by inducing secretion of the cytoprotective pigment epithelium-derived growth factor (PEDF) and probably other protective transcripts in a GNA13/RHOA/SRE-dependent manner. Forms dynamic heteroreceptor complexes with HTR1A and GALR1 depending on cell type or specific physiological states, resulting in signaling diversity: HTR1A-GPR39 shows additive increase in signaling along the serum response element (SRE) and NF-kappa-B pathways while GALR1 acts as an antagonist blocking SRE. This Bos taurus (Bovine) protein is G-protein coupled receptor 39 (GPR39).